A 289-amino-acid chain; its full sequence is HTH-type transcriptional regulator CatR (289 aa).

The 57-residue stretch at 1-57 (MELRHLRYFKVLAETLNFTRAAELLHIAQPPLSRQISQLEDQLGTLLVVRERPLRLT) folds into the HTH lysR-type domain. Residues 18–37 (FTRAAELLHIAQPPLSRQIS) constitute a DNA-binding region (H-T-H motif).

Belongs to the LysR transcriptional regulatory family.

The protein resides in the cytoplasm. Its function is as follows. Positive regulator of the catBC operon that degrades catechol to acetyl-CoA. CatR binds in trans to the catR-catBC promoter-control region in the presence or absence of inducer but only activates the catBC operon in the presence of the inducer, cis-cis-muconate. The sequence is that of HTH-type transcriptional regulator CatR (catR) from Pseudomonas putida (Arthrobacter siderocapsulatus).